A 107-amino-acid chain; its full sequence is Nucleoid-associated protein mlr5504 (107 aa).

This sequence belongs to the YbaB/EbfC family. As to quaternary structure, homodimer.

The protein resides in the cytoplasm. Its subcellular location is the nucleoid. Binds to DNA and alters its conformation. May be involved in regulation of gene expression, nucleoid organization and DNA protection. The polypeptide is Nucleoid-associated protein mlr5504 (Mesorhizobium japonicum (strain LMG 29417 / CECT 9101 / MAFF 303099) (Mesorhizobium loti (strain MAFF 303099))).